The sequence spans 331 residues: Peroxidase 49 (331 aa).

The signal sequence occupies residues 1–22; it reads MARLTSFLLLLSLICFVPLCLC. Cystine bridges form between Cys-39–Cys-119, Cys-72–Cys-77, Cys-125–Cys-326, and Cys-204–Cys-236. The active-site Proton acceptor is the His-70. Ca(2+) contacts are provided by Asp-71, Val-74, Gly-76, Asp-78, and Ser-80. A substrate-binding site is contributed by Pro-167. Residue Asn-170 is glycosylated (N-linked (GlcNAc...) asparagine). His-197 is a binding site for heme b. Thr-198 serves as a coordination point for Ca(2+). N-linked (GlcNAc...) asparagine glycosylation is present at Asn-213. Positions 249, 252, and 257 each coordinate Ca(2+).

It belongs to the peroxidase family. Classical plant (class III) peroxidase subfamily. Requires heme b as cofactor. The cofactor is Ca(2+).

It is found in the secreted. The enzyme catalyses 2 a phenolic donor + H2O2 = 2 a phenolic radical donor + 2 H2O. In terms of biological role, removal of H(2)O(2), oxidation of toxic reductants, biosynthesis and degradation of lignin, suberization, auxin catabolism, response to environmental stresses such as wounding, pathogen attack and oxidative stress. These functions might be dependent on each isozyme/isoform in each plant tissue. In Arabidopsis thaliana (Mouse-ear cress), this protein is Peroxidase 49 (PER49).